A 539-amino-acid chain; its full sequence is Chaperonin GroEL (539 aa).

ATP is bound by residues 29 to 32 (TLGP), 86 to 90 (DGTTT), Gly-413, 476 to 478 (NAA), and Asp-492.

It belongs to the chaperonin (HSP60) family. In terms of assembly, forms a cylinder of 14 subunits composed of two heptameric rings stacked back-to-back. Interacts with the co-chaperonin GroES.

Its subcellular location is the cytoplasm. It carries out the reaction ATP + H2O + a folded polypeptide = ADP + phosphate + an unfolded polypeptide.. Its function is as follows. Together with its co-chaperonin GroES, plays an essential role in assisting protein folding. The GroEL-GroES system forms a nano-cage that allows encapsulation of the non-native substrate proteins and provides a physical environment optimized to promote and accelerate protein folding. The polypeptide is Chaperonin GroEL (Macrococcus caseolyticus (strain JCSC5402) (Macrococcoides caseolyticum)).